The primary structure comprises 282 residues: Bifunctional protein FolD (282 aa).

Residues 164 to 166 (GRS) and Ser-189 contribute to the NADP(+) site.

This sequence belongs to the tetrahydrofolate dehydrogenase/cyclohydrolase family. In terms of assembly, homodimer.

The enzyme catalyses (6R)-5,10-methylene-5,6,7,8-tetrahydrofolate + NADP(+) = (6R)-5,10-methenyltetrahydrofolate + NADPH. It catalyses the reaction (6R)-5,10-methenyltetrahydrofolate + H2O = (6R)-10-formyltetrahydrofolate + H(+). It functions in the pathway one-carbon metabolism; tetrahydrofolate interconversion. Catalyzes the oxidation of 5,10-methylenetetrahydrofolate to 5,10-methenyltetrahydrofolate and then the hydrolysis of 5,10-methenyltetrahydrofolate to 10-formyltetrahydrofolate. The polypeptide is Bifunctional protein FolD (Lachnoclostridium phytofermentans (strain ATCC 700394 / DSM 18823 / ISDg) (Clostridium phytofermentans)).